Here is a 345-residue protein sequence, read N- to C-terminus: Transcription initiation factor IIB (345 aa).

The TFIIB-type zinc-finger motif lies at 8-40; the sequence is VGRNCPHCSAVDSLQTDDVMGEVACTACALVVA. Zn(2+)-binding residues include Cys12, Cys15, Cys32, and Cys35. Disordered stretches follow at residues 59–89 and 318–345; these read DVDH…HMSS and PTAG…REET. Residues 71–83 are compositionally biased toward low complexity; sequence TAATSAAGSLSAA.

The protein belongs to the TFIIB family. Monomer. Interacts with RNA polymerase II subunits RPB1 and RPB2. Interacts with TBP; the interaction is direct.

It localises to the nucleus. In terms of biological role, specifically binds to the promoter of the spliced leader (SL) RNA gene and thus is essential for SLRNA transcription. This chain is Transcription initiation factor IIB, found in Trypanosoma brucei brucei.